The chain runs to 260 residues: Thiazole synthase (260 aa).

The Schiff-base intermediate with DXP role is filled by K96. 1-deoxy-D-xylulose 5-phosphate contacts are provided by residues G157, 184–185, and 206–207; these read AG and NT.

This sequence belongs to the ThiG family. In terms of assembly, homotetramer. Forms heterodimers with either ThiH or ThiS.

Its subcellular location is the cytoplasm. It catalyses the reaction [ThiS sulfur-carrier protein]-C-terminal-Gly-aminoethanethioate + 2-iminoacetate + 1-deoxy-D-xylulose 5-phosphate = [ThiS sulfur-carrier protein]-C-terminal Gly-Gly + 2-[(2R,5Z)-2-carboxy-4-methylthiazol-5(2H)-ylidene]ethyl phosphate + 2 H2O + H(+). Its pathway is cofactor biosynthesis; thiamine diphosphate biosynthesis. In terms of biological role, catalyzes the rearrangement of 1-deoxy-D-xylulose 5-phosphate (DXP) to produce the thiazole phosphate moiety of thiamine. Sulfur is provided by the thiocarboxylate moiety of the carrier protein ThiS. In vitro, sulfur can be provided by H(2)S. This is Thiazole synthase from Bradyrhizobium sp. (strain BTAi1 / ATCC BAA-1182).